A 58-amino-acid polypeptide reads, in one-letter code: Small ribosomal subunit protein bS21 (58 aa).

Belongs to the bacterial ribosomal protein bS21 family.

In Lactobacillus johnsonii (strain CNCM I-12250 / La1 / NCC 533), this protein is Small ribosomal subunit protein bS21.